We begin with the raw amino-acid sequence, 81 residues long: Probable antitoxin MazE2 (81 aa).

Forms a complex with cognate toxin MazF2.

Its function is as follows. Antitoxin component of a type II toxin-antitoxin (TA) system. The polypeptide is Probable antitoxin MazE2 (mazE2) (Mycobacterium tuberculosis (strain ATCC 25618 / H37Rv)).